A 142-amino-acid chain; its full sequence is Large ribosomal subunit protein uL13 (142 aa).

This sequence belongs to the universal ribosomal protein uL13 family. In terms of assembly, part of the 50S ribosomal subunit.

In terms of biological role, this protein is one of the early assembly proteins of the 50S ribosomal subunit, although it is not seen to bind rRNA by itself. It is important during the early stages of 50S assembly. The polypeptide is Large ribosomal subunit protein uL13 (Stenotrophomonas maltophilia (strain K279a)).